The following is a 331-amino-acid chain: Nucleoporin Nup35 (331 aa).

Disordered regions lie at residues 1-63 (MEPM…HELN) and 79-110 (AHTAVGANSSTTAHGQTHSHHQTGPPTQGLFD). Composition is skewed to polar residues over residues 8–20 (SPVNSPGSNQTQY), 35–56 (HKNTLSPKTGRSNISFATSPGG), and 84–104 (GANSSTTAHGQTHSHHQTGPP). An RRM Nup35-type domain is found at 187 to 268 (RLSDFWVTIF…SRCTDRSVID (82 aa)).

The protein belongs to the Nup35 family. In terms of assembly, interacts with Nup154.

The protein resides in the nucleus. It localises to the nuclear pore complex. Functions as a component of the nuclear pore complex (NPC). May have a role in the organization of the inner nuclear membrane proteins at the nuclear envelope together with Nup154. The polypeptide is Nucleoporin Nup35 (Drosophila melanogaster (Fruit fly)).